The sequence spans 1515 residues: Apolipophorin (1515 aa).

In terms of domain architecture, VWFD spans Leu952 to Pro1118. Cys976 and Cys1117 are oxidised to a cystine. N-linked (GlcNAc...) asparagine glycosylation is present at Asn988.

Hemolymph.

It localises to the secreted. Its function is as follows. Mediates transport for various types of lipids in hemolymph. Acts by forming lipoprotein particles that bind lipoproteins and lipids. Binds the A.niger cell wall component alpha-1,3-glucan, a fungal pathogen-associated molecular pattern (PAMP) that activates the host immune response. The polypeptide is Apolipophorin (Galleria mellonella (Greater wax moth)).